The chain runs to 294 residues: uncharacterized protein (294 aa).

This is an uncharacterized protein from Bacillus subtilis (strain 168).